The following is a 429-amino-acid chain: Asparagine--tRNA ligase (429 aa).

The protein belongs to the class-II aminoacyl-tRNA synthetase family. In terms of assembly, homodimer.

It localises to the cytoplasm. The catalysed reaction is tRNA(Asn) + L-asparagine + ATP = L-asparaginyl-tRNA(Asn) + AMP + diphosphate + H(+). The chain is Asparagine--tRNA ligase from Desulforamulus reducens (strain ATCC BAA-1160 / DSM 100696 / MI-1) (Desulfotomaculum reducens).